The chain runs to 267 residues: Hydroxyethylthiazole kinase (267 aa).

Methionine 51 provides a ligand contact to substrate. ATP is bound by residues arginine 127 and serine 173. Alanine 200 is a binding site for substrate.

It belongs to the Thz kinase family. Mg(2+) is required as a cofactor.

It catalyses the reaction 5-(2-hydroxyethyl)-4-methylthiazole + ATP = 4-methyl-5-(2-phosphooxyethyl)-thiazole + ADP + H(+). It participates in cofactor biosynthesis; thiamine diphosphate biosynthesis; 4-methyl-5-(2-phosphoethyl)-thiazole from 5-(2-hydroxyethyl)-4-methylthiazole: step 1/1. Its function is as follows. Catalyzes the phosphorylation of the hydroxyl group of 4-methyl-5-beta-hydroxyethylthiazole (THZ). This Psychromonas ingrahamii (strain DSM 17664 / CCUG 51855 / 37) protein is Hydroxyethylthiazole kinase.